The chain runs to 147 residues: C-glycoside deglycosidase beta subunit (147 aa).

This sequence belongs to the C-glycoside deglycosidase beta subunit family. Heterooctamer composed of four alpha subunits (DfgA) and four beta subunits (DfgB). The cofactor is Mn(2+).

It carries out the reaction 3''-dehydroisoorientin = 1,5-anhydro-D-erythro-hex-1-en-3-ulose + luteolin. The catalysed reaction is 3''-dehydroisovitexin = 1,5-anhydro-D-erythro-hex-1-en-3-ulose + apigenin. Its activity is regulated as follows. Activity is strongly reduced in the presence of chelating agents. Its function is as follows. Carbon-carbon bond-cleaving enzyme which participates in the metabolism of C-glycosides. Acts on the C6-glycosylated compounds 3''-dehydroisoorientin (3''-oxo-homoorientin) and 3''-dehydroisovitexin (3''-oxo-isovitexin). This is C-glycoside deglycosidase beta subunit from Eubacterium cellulosolvens (strain ATCC 43171 / JCM 9499 / 6) (Cillobacterium cellulosolvens).